Here is a 956-residue protein sequence, read N- to C-terminus: Glutamate receptor ionotropic, kainate 4 (956 aa).

The N-terminal stretch at Met-1–Cys-20 is a signal peptide. Residues Ser-21–Pro-545 lie on the Extracellular side of the membrane. Residues Asn-158, Asn-220, Asn-272, Asn-286, Asn-323, Asn-408, Asn-415, and Asn-479 are each glycosylated (N-linked (GlcNAc...) asparagine). Positions 500, 502, and 507 each coordinate L-glutamate. A helical membrane pass occupies residues Gly-546–Ala-566. Topologically, residues Arg-567–Gly-623 are cytoplasmic. A helical membrane pass occupies residues Val-624 to Leu-644. Residues Thr-645 to Asn-804 lie on the Extracellular side of the membrane. Positions 674, 675, and 723 each coordinate L-glutamate. An N-linked (GlcNAc...) asparagine glycan is attached at Asn-736. The chain crosses the membrane as a helical span at residues Ile-805–Leu-825. At Glu-826–Glu-956 the chain is on the cytoplasmic side. The interval Leu-931–Glu-956 is disordered. Basic and acidic residues predominate over residues Arg-939–Lys-948.

Belongs to the glutamate-gated ion channel (TC 1.A.10.1) family. GRIK4 subfamily. As to quaternary structure, homodimer. Can form functional heteromeric receptors with GRIK1, GRIK2 and GRIK3 subunits. Forms a heteromeric complex with GRIK2. In terms of tissue distribution, expressed in the hippocampus and cerebellum (at protein level).

Its subcellular location is the cell membrane. It localises to the postsynaptic cell membrane. The protein resides in the presynaptic cell membrane. Ionotropic glutamate receptor that functions as a cation-permeable ligand-gated ion channel. Cannot form functional channels on its own and produces channel activity only in heteromeric assembly with GRIK1, GRIK2 and GRIK3 subunits. The sequence is that of Glutamate receptor ionotropic, kainate 4 (Grik4) from Mus musculus (Mouse).